Here is a 63-residue protein sequence, read N- to C-terminus: uncharacterized protein (63 aa).

Residues 3–23 (IIYIILGFLSLAIGIIGIFPS) traverse the membrane as a helical segment.

It is found in the membrane. This is an uncharacterized protein from Haemophilus influenzae (strain ATCC 51907 / DSM 11121 / KW20 / Rd).